The chain runs to 192 residues: MITISEEAQAHFVKLLSKQESGTNIRVFVVNPGTSSAECGVSYCPPDAVEETDTRLTFNGFDAVVDEESAPYLDEAEIDYVTDQMGSQLTLKAPNAKARKVSDDAPLIERINYMIESEINPQLANHGGQVVLTELTDDGYAVLQFGGGCNGCSMVDVTLKDGIEKQMLEQFAGELNGVRDATEHQAGEHSYY.

Positions 149 and 152 each coordinate [4Fe-4S] cluster.

The protein belongs to the NfuA family. In terms of assembly, homodimer. The cofactor is [4Fe-4S] cluster.

In terms of biological role, involved in iron-sulfur cluster biogenesis. Binds a 4Fe-4S cluster, can transfer this cluster to apoproteins, and thereby intervenes in the maturation of Fe/S proteins. Could also act as a scaffold/chaperone for damaged Fe/S proteins. The sequence is that of Fe/S biogenesis protein NfuA from Alteromonas mediterranea (strain DSM 17117 / CIP 110805 / LMG 28347 / Deep ecotype).